Consider the following 463-residue polypeptide: L-cystine uptake protein TcyP (463 aa).

A run of 10 helical transmembrane segments spans residues 3 to 23 (TLLVVLHVFILFLLILGLFVM), 34 to 54 (VFTALGLGIVFGFALQLIYGP), 73 to 93 (YVKLLQMVVMPLVFISILGAF), 105 to 125 (ISGLIIGILVATTAVAAAVGI), 184 to 204 (PTSTIAVVIFAAFLGVAFLGV), 225 to 245 (IVMRVVTLILRLTPYGVLAIM), 262 to 282 (MFVIASYAALITMFIIHLLLL), 338 to 358 (LSIGQNGCAGIYPAMLAMMIA), 369 to 389 (VFIITVIAVVAISSFGVAGVG), and 394 to 414 (FAALLVLSSLNMPVALAGLLI).

This sequence belongs to the dicarboxylate/amino acid:cation symporter (DAACS) (TC 2.A.23) family.

Its subcellular location is the cell membrane. In terms of biological role, mediates uptake of L-cystine, the oxidized form of L-cysteine. Although it is more specific for L-cystine, it could also transport a much broader range of amino acids and sulfur compounds including S-methylcysteine. This Bacillus subtilis (strain 168) protein is L-cystine uptake protein TcyP (tcyP).